A 1384-amino-acid chain; its full sequence is MGKFRSKLKRNGKGKTWSRGESATSNPTQMKHRMKAKSRFFQPNLSLAAATTTGLTMEAVHKHEQSQAFNAETTTVNDVAGSLRSFKLDDDDDGMSGSGTAPTGTAPTGTIKTFQTFASNYSGCSNTCFQKLVTSFRSSSALHKEMLAILSALTEIIRENGGGESSTEYFLLLMEQIEAATEERDIVAGVTLLAMGINSVPAPVLKKRFAQTADTMQRLLQRFMESTNQSVIRHVIGCLSVILRAQDYAAWSYSSTFQYFDAILAFSIHSQPKIRKAAQHAIALIIHGSCFMLPAIKSDDNEMDEAVEQPKVKHHPASSRVAKFCLAQFKPEVLANAQTTVLHTLELLKDTLYGFKTEDIRSVCEHLLSIMTAANVLVRTNCFQTLYSLFLKKSPNLNASLCAKLLAAIHEYRPDKSDIRQTIAWVTVLKEGHLHLATMQLDLCMQALPRLIDVCTTDLWLSDQKELVAGVSNCIKELLQDCVSRACATAEDAQCNRQSVSRIIASLHKMLNAPFGEISRFVILIFSFVFEACGKLFGSELTPPLMTICKRYDTQSAHRLQIEHTVISAIKALGPELVLTAIPLADGKGVMQLERSWLLPLLREGANGASLQFFKEKIVALAMDCQLKWKEFAEAKNNSSSHIYELLCCQLWGLFPGFCRQPRDPEYLRYLAPTLGAAVEKNPEFRPPIYDGLMELLGDNQSAECHQAIGQYAKNFLPRLFNIYTQKPNGTYEADQRKRVLEVIRLYISRAPADVQLELFENAQEQLAASALASFEYDAFFDINAAIVRVQTCKGIKAYFDKYMAPILRNDKSKLVAKDEQKLKKQQRKTYELLRELMTSELPSCQKFTRKNSIVLQQILLDSFNTSCNVCQASRLHCLKSLIDCHSNLAYNDQLVMKAIPEAVLNYKEFSNYKEQVAEQLIKSITQLYHDAGKINDFVDILTAGFAGDEMLVTNTILAFRAVLQQQGEHLTVATLEFVLQQVSVFLVQKSRKQAEAAIAFLITFIKVMPIPLVANHLEAIMRSLSAMTKDTKRYCRIQIGYLLKKLCIRFSPGELAGFVPGDDDVIHRRLKMIRKRTRRDLRKKQNLEAQEDSSDDELVSGLQEKSYTIDDMLADSDSDLPEDMDAKDEAGAAAAASKRSKNAKQQKSTYIREDPDEIVDLADLKSIGNVLTSGSAQTATPAQSQKTKAQLPNGGFKTADDGRLIISDKALRGQGGNDQSDDDSDSDASMAYGTVAKQPKVKRGMEDDSSDEDKLQQKLVPKRVRKGDDAMSMKSGKTTASSRYTAGGKGIHRQLTAGNSDAMSVKSGKSTSRPAGSEYGSKKAKGDMKKSGKLDPYAYIPLTRNNLNKRKRSMNSRKFKSVLRGAGAENGGAGGGRVSKKYK.

Basic residues predominate over residues 1-13 (MGKFRSKLKRNGK). Residues 1–32 (MGKFRSKLKRNGKGKTWSRGESATSNPTQMKH) are disordered. Over residues 19 to 29 (RGESATSNPTQ) the composition is skewed to polar residues. A phosphoserine mark is found at Ser82, Ser85, Ser96, Ser1094, Ser1095, Ser1117, and Ser1119. 3 disordered regions span residues 1082-1102 (LRKK…LVSG), 1114-1155 (LADS…IRED), and 1176-1384 (SAQT…KKYK). Composition is skewed to acidic residues over residues 1090–1099 (AQEDSSDDEL) and 1114–1127 (LADS…DMDA). The segment covering 1176 to 1191 (SAQTATPAQSQKTKAQ) has biased composition (polar residues). A phosphoserine mark is found at Ser1221, Ser1225, Ser1227, Ser1230, Ser1250, and Ser1251. Polar residues-rich tracts occupy residues 1276 to 1285 (SGKTTASSRY) and 1297 to 1315 (TAGN…TSRP). Over residues 1321-1334 (GSKKAKGDMKKSGK) the composition is skewed to basic and acidic residues. Basic residues predominate over residues 1348–1362 (LNKRKRSMNSRKFKS). The segment covering 1369-1378 (AENGGAGGGR) has biased composition (gly residues).

It belongs to the RRP12 family.

It localises to the nucleus. In Drosophila melanogaster (Fruit fly), this protein is RRP12-like protein.